Here is a 61-residue protein sequence, read N- to C-terminus: Large ribosomal subunit protein bL28 (61 aa).

It belongs to the bacterial ribosomal protein bL28 family.

The polypeptide is Large ribosomal subunit protein bL28 (Nocardioides sp. (strain ATCC BAA-499 / JS614)).